We begin with the raw amino-acid sequence, 403 residues long: Arginine biosynthesis bifunctional protein ArgJ (403 aa).

Substrate contacts are provided by threonine 149, lysine 175, threonine 186, glutamate 272, asparagine 398, and threonine 403. Threonine 186 (nucleophile) is an active-site residue.

This sequence belongs to the ArgJ family. In terms of assembly, heterotetramer of two alpha and two beta chains.

Its subcellular location is the cytoplasm. The enzyme catalyses N(2)-acetyl-L-ornithine + L-glutamate = N-acetyl-L-glutamate + L-ornithine. It carries out the reaction L-glutamate + acetyl-CoA = N-acetyl-L-glutamate + CoA + H(+). It functions in the pathway amino-acid biosynthesis; L-arginine biosynthesis; L-ornithine and N-acetyl-L-glutamate from L-glutamate and N(2)-acetyl-L-ornithine (cyclic): step 1/1. Its pathway is amino-acid biosynthesis; L-arginine biosynthesis; N(2)-acetyl-L-ornithine from L-glutamate: step 1/4. Catalyzes two activities which are involved in the cyclic version of arginine biosynthesis: the synthesis of N-acetylglutamate from glutamate and acetyl-CoA as the acetyl donor, and of ornithine by transacetylation between N(2)-acetylornithine and glutamate. The polypeptide is Arginine biosynthesis bifunctional protein ArgJ (Caldanaerobacter subterraneus subsp. tengcongensis (strain DSM 15242 / JCM 11007 / NBRC 100824 / MB4) (Thermoanaerobacter tengcongensis)).